A 363-amino-acid polypeptide reads, in one-letter code: Ribosomal RNA small subunit methyltransferase H (363 aa).

Residues 55 to 57 (GGH), Asp-75, Asp-122, and Gln-129 contribute to the S-adenosyl-L-methionine site.

The protein belongs to the methyltransferase superfamily. RsmH family.

Its subcellular location is the cytoplasm. The enzyme catalyses cytidine(1402) in 16S rRNA + S-adenosyl-L-methionine = N(4)-methylcytidine(1402) in 16S rRNA + S-adenosyl-L-homocysteine + H(+). Its function is as follows. Specifically methylates the N4 position of cytidine in position 1402 (C1402) of 16S rRNA. The polypeptide is Ribosomal RNA small subunit methyltransferase H (Bordetella petrii (strain ATCC BAA-461 / DSM 12804 / CCUG 43448)).